A 351-amino-acid polypeptide reads, in one-letter code: Foldase protein PrsA 1 (351 aa).

Positions 1–22 are cleaved as a signal peptide; the sequence is MKNSNKLIASVVTLASVMALAA. The N-palmitoyl cysteine moiety is linked to residue Cys23. A lipid anchor (S-diacylglycerol cysteine) is attached at Cys23. The PpiC domain maps to 145-240; the sequence is TPTMAVEMIT…KKFYIVKVTK (96 aa). Composition is skewed to low complexity over residues 303-317 and 326-351; these read KTKA…SESS and ESEQ…PAAQ. The tract at residues 303–351 is disordered; sequence KTKAASESSTTSESSKAAEENPSESEQTQTSSAEEPTETEAQTQEPAAQ.

This sequence belongs to the PrsA family.

It is found in the cell membrane. It catalyses the reaction [protein]-peptidylproline (omega=180) = [protein]-peptidylproline (omega=0). In terms of biological role, plays a major role in protein secretion by helping the post-translocational extracellular folding of several secreted proteins. The chain is Foldase protein PrsA 1 (prsA1) from Streptococcus pyogenes serotype M18 (strain MGAS8232).